Reading from the N-terminus, the 158-residue chain is 2-C-methyl-D-erythritol 2,4-cyclodiphosphate synthase (158 aa).

Residues Asp9 and His11 each contribute to the a divalent metal cation site. Residues 9–11 (DAH) and 35–36 (HS) contribute to the 4-CDP-2-C-methyl-D-erythritol 2-phosphate site. His43 serves as a coordination point for a divalent metal cation. 4-CDP-2-C-methyl-D-erythritol 2-phosphate is bound by residues 57 to 59 (DIG), 62 to 66 (FPDTD), 133 to 136 (TTTE), Phe140, and Arg143.

This sequence belongs to the IspF family. As to quaternary structure, homotrimer. It depends on a divalent metal cation as a cofactor.

It catalyses the reaction 4-CDP-2-C-methyl-D-erythritol 2-phosphate = 2-C-methyl-D-erythritol 2,4-cyclic diphosphate + CMP. It participates in isoprenoid biosynthesis; isopentenyl diphosphate biosynthesis via DXP pathway; isopentenyl diphosphate from 1-deoxy-D-xylulose 5-phosphate: step 4/6. Functionally, involved in the biosynthesis of isopentenyl diphosphate (IPP) and dimethylallyl diphosphate (DMAPP), two major building blocks of isoprenoid compounds. Catalyzes the conversion of 4-diphosphocytidyl-2-C-methyl-D-erythritol 2-phosphate (CDP-ME2P) to 2-C-methyl-D-erythritol 2,4-cyclodiphosphate (ME-CPP) with a corresponding release of cytidine 5-monophosphate (CMP). The polypeptide is 2-C-methyl-D-erythritol 2,4-cyclodiphosphate synthase (Methylococcus capsulatus (strain ATCC 33009 / NCIMB 11132 / Bath)).